The following is a 278-amino-acid chain: MAEMELWFTEQQTPDLGFTCKITKTIYTAKTQYQDLAILETKQFGRMLVLDGAVQTTIADEFCYHELISHVPLFTHPNPKKVAVIGGGDGGVIREILKHDEVEKAYLIEIDREVIEASKKYLPEISCALDDERAEVIITDGIKFVSENKNMFDVIIVDSTDPVGPAVGLFQDSFYKAVFECLKEDGLFVAQTESPFYDQDLIKNVFHAVKSIFPITRLYLGFIPTYPSGLWSFTLGSKKYDPLEVDVSRIKRIDTKYYNPELHKALFALPTFVQEIIK.

Residues 5–238 (ELWFTEQQTP…GLWSFTLGSK (234 aa)) form the PABS domain. Position 34 (glutamine 34) interacts with S-methyl-5'-thioadenosine. The spermidine site is built by histidine 65 and aspartate 89. Residues glutamate 109 and 140-141 (DG) each bind S-methyl-5'-thioadenosine. The Proton acceptor role is filled by aspartate 158. 158 to 161 (DSTD) contributes to the spermidine binding site. Position 165 (proline 165) interacts with S-methyl-5'-thioadenosine.

The protein belongs to the spermidine/spermine synthase family. As to quaternary structure, homodimer or homotetramer.

The protein localises to the cytoplasm. It carries out the reaction S-adenosyl 3-(methylsulfanyl)propylamine + putrescine = S-methyl-5'-thioadenosine + spermidine + H(+). The protein operates within amine and polyamine biosynthesis; spermidine biosynthesis; spermidine from putrescine: step 1/1. Functionally, catalyzes the irreversible transfer of a propylamine group from the amino donor S-adenosylmethioninamine (decarboxy-AdoMet) to putrescine (1,4-diaminobutane) to yield spermidine. In Caldicellulosiruptor bescii (strain ATCC BAA-1888 / DSM 6725 / KCTC 15123 / Z-1320) (Anaerocellum thermophilum), this protein is Polyamine aminopropyltransferase.